Here is a 40-residue protein sequence, read N- to C-terminus: Light-harvesting protein B800/830/1020 beta-1 chain (40 aa).

Residues 1–20 (ANDIRPLRDFEDEEAQEFHQ) are Cytoplasmic-facing. A bacteriochlorophyll-binding residues include histidine 19 and histidine 37. The chain crosses the membrane as a helical span at residues 21–40 (AAVQAFFLYVAVAFVAHLPV).

It belongs to the antenna complex beta subunit family. The core complex is formed by different alpha and beta chains, binding bacteriochlorophyll molecules, and arranged most probably in tetrameric structures disposed around the reaction center. The non-pigmented gamma chains may constitute additional components.

It is found in the cell inner membrane. Antenna complexes are light-harvesting systems, which transfer the excitation energy to the reaction centers. The polypeptide is Light-harvesting protein B800/830/1020 beta-1 chain (Halorhodospira halochloris (Ectothiorhodospira halochloris)).